The sequence spans 235 residues: Calcium-activated potassium channel subunit beta-2 (235 aa).

Positions 1–45 are ball and chain; that stretch reads MFIWTSGRTSSSYRHDEKRNIYQKIRDHDLLDKRKTVTALKAGED. Residues 1–46 lie on the Cytoplasmic side of the membrane; sequence MFIWTSGRTSSSYRHDEKRNIYQKIRDHDLLDKRKTVTALKAGEDR. The chain crosses the membrane as a helical span at residues 47–67; that stretch reads AILLGLAMMVCSIMMYFLLGI. Residues 68 to 194 are Extracellular-facing; it reads TLLRSYMQSV…VILTKLYSSN (127 aa). Asparagine 88, asparagine 96, and asparagine 119 each carry an N-linked (GlcNAc...) asparagine glycan. The chain crosses the membrane as a helical span at residues 195-215; it reads VLFHSLFWPTCMMAGGVAIVA. Topologically, residues 216–235 are cytoplasmic; the sequence is MVKLTQYLSLLCERIQRINR.

It belongs to the KCNMB (TC 8.A.14.1) family. KCNMB2 subfamily. In terms of assembly, interacts with KCNMA1 tetramer. There are probably 4 molecules of KCMNB2 per KCNMA1 tetramer. In terms of processing, N-glycosylated. Highly expressed in brain and heart. Also expressed in lung.

It localises to the membrane. Regulatory subunit of the calcium activated potassium KCNMA1 (maxiK) channel. Modulates the calcium sensitivity and gating kinetics of KCNMA1, thereby contributing to KCNMA1 channel diversity. Acts as a negative regulator that confers rapid and complete inactivation of KCNMA1 channel complex. The chain is Calcium-activated potassium channel subunit beta-2 (Kcnmb2) from Rattus norvegicus (Rat).